Reading from the N-terminus, the 92-residue chain is Neuropeptide F (92 aa).

Positions 1 to 27 (MSQSRPLALLVVAALVAAAVLVAAAEA) are cleaved as a signal peptide. The propeptide occupies 28 to 51 (QQADGNKLEGLADALKYLQELDRY). Phe60 carries the post-translational modification Phenylalanine amide. Residues 64–92 (AELRPDVVDDVIPEEMSADKFWRRFARRR) constitute a propeptide that is removed on maturation.

This sequence belongs to the NPY family. In terms of tissue distribution, widely expressed in the nervous system. Expressed in corpora cardiaca, hypocerebral ganglion, frontal ganglion, protocerebrum, antennal lobe, tritocerebrum and thoracic ganglia. Not detected in corpora allata, pars intercerebralis, circumesophageal connectives, subesophageal ganglion, abdominal ganglion and abdominal perisympathetic organs.

The protein resides in the secreted. In terms of biological role, accelerates ovarian maturation in females. In Locusta migratoria (Migratory locust), this protein is Neuropeptide F.